The following is a 187-amino-acid chain: Elongation factor P (187 aa).

Belongs to the elongation factor P family.

It localises to the cytoplasm. Its pathway is protein biosynthesis; polypeptide chain elongation. Involved in peptide bond synthesis. Stimulates efficient translation and peptide-bond synthesis on native or reconstituted 70S ribosomes in vitro. Probably functions indirectly by altering the affinity of the ribosome for aminoacyl-tRNA, thus increasing their reactivity as acceptors for peptidyl transferase. This Clavibacter michiganensis subsp. michiganensis (strain NCPPB 382) protein is Elongation factor P.